The chain runs to 397 residues: CCA-adding enzyme (397 aa).

Residues Gly-26 and Arg-29 each contribute to the ATP site. CTP contacts are provided by Gly-26 and Arg-29. Mg(2+) is bound by residues Asp-39 and Asp-41. The ATP site is built by Arg-110, Asp-153, Arg-156, Arg-159, and Arg-162. 5 residues coordinate CTP: Arg-110, Asp-153, Arg-156, Arg-159, and Arg-162.

The protein belongs to the tRNA nucleotidyltransferase/poly(A) polymerase family. Bacterial CCA-adding enzyme type 3 subfamily. In terms of assembly, homodimer. It depends on Mg(2+) as a cofactor.

The catalysed reaction is a tRNA precursor + 2 CTP + ATP = a tRNA with a 3' CCA end + 3 diphosphate. The enzyme catalyses a tRNA with a 3' CCA end + 2 CTP + ATP = a tRNA with a 3' CCACCA end + 3 diphosphate. Its function is as follows. Catalyzes the addition and repair of the essential 3'-terminal CCA sequence in tRNAs without using a nucleic acid template. Adds these three nucleotides in the order of C, C, and A to the tRNA nucleotide-73, using CTP and ATP as substrates and producing inorganic pyrophosphate. tRNA 3'-terminal CCA addition is required both for tRNA processing and repair. Also involved in tRNA surveillance by mediating tandem CCA addition to generate a CCACCA at the 3' terminus of unstable tRNAs. While stable tRNAs receive only 3'-terminal CCA, unstable tRNAs are marked with CCACCA and rapidly degraded. This Bacillus thuringiensis subsp. konkukian (strain 97-27) protein is CCA-adding enzyme.